Here is a 430-residue protein sequence, read N- to C-terminus: NAD(P)(+) glycohydrolase toxin Tse6 (430 aa).

The next 3 membrane-spanning stretches (helical) occupy residues F17 to V37, L46 to V66, and L193 to L213.

Interacts with Tsi6, VgrG1a, EagT6 and EF-Tu.

The protein resides in the membrane. The enzyme catalyses NAD(+) + H2O = ADP-D-ribose + nicotinamide + H(+). Functionally, type VI secretion exported toxin that acts as a glycohydrolase on bacterial target cells and degrades the essential dinucleotides NAD(+) and NADP(+), thereby inducing bacteriostasis. The activity resides in the C-terminal region that is initially neutralized by the cognate immunity protein Tsi6. The protein is NAD(P)(+) glycohydrolase toxin Tse6 of Pseudomonas aeruginosa (strain ATCC 15692 / DSM 22644 / CIP 104116 / JCM 14847 / LMG 12228 / 1C / PRS 101 / PAO1).